Reading from the N-terminus, the 168-residue chain is Auxin-responsive protein IAA1 (168 aa).

Residues 1–74 (MEVTNGLNLK…NRKNNNNKNV (74 aa)) are disordered. An EAR-like (transcriptional repression) motif is present at residues 14-18 (LRLGL). Polar residues predominate over residues 23-34 (EEQQLELSCVRS). One can recognise a PB1 domain in the interval 74–161 (VSYVKVSMDG…SCQKLRIMKG (88 aa)).

Belongs to the Aux/IAA family. In terms of assembly, homodimers and heterodimers. Interacts with the auxin-responsive protein IAA2. Interacts with TPL. In terms of processing, phosphorylated by phytochrome A in vitro. As to expression, preferentially expressed in stems, leaves and flowers.

Its subcellular location is the nucleus. Aux/IAA proteins are short-lived transcriptional factors that function as repressors of early auxin response genes at low auxin concentrations. Repression is thought to result from the interaction with auxin response factors (ARFs), proteins that bind to the auxin-responsive promoter element (AuxRE). Formation of heterodimers with ARF proteins may alter their ability to modulate early auxin response genes expression. This Arabidopsis thaliana (Mouse-ear cress) protein is Auxin-responsive protein IAA1 (IAA1).